The primary structure comprises 296 residues: MGAREILEVSKPRIVLLLVITAVTTMYAGDALSAGEPGPDLWDYAHLMAAGALASAGSSALNHYYDRDIDPKMRRTARRPIPSGRIGENIVLAYGLAISSAAVVYAYFLLNAPTAFFIALGIFSYVIIYTAWLKRTNRSNIVIGGIAGSAASWAGWTAATGTLDLLGFLIGFLVFVWTPSHFWCLAMKIREDYEAAGVPMLPVVIGMQRTSKYILGNTLLLLPYSLALYAFGMGLVYLVIAVASGGLMLVYHYKLTKTPTPDFAWKAYKVTAPYLTIIFAAVALDAAFHYPFPFPF.

The next 8 helical transmembrane spans lie at 14–34 (IVLL…ALSA), 41–61 (LWDY…SSAL), 86–106 (IGEN…VVYA), 108–128 (FLLN…YVII), 141–161 (IVIG…AATG), 165–185 (LLGF…FWCL), 230–250 (AFGM…LMLV), and 274–294 (YLTI…PFPF).

This sequence belongs to the UbiA prenyltransferase family. Protoheme IX farnesyltransferase subfamily.

It is found in the cell membrane. It carries out the reaction heme b + (2E,6E)-farnesyl diphosphate + H2O = Fe(II)-heme o + diphosphate. It participates in porphyrin-containing compound metabolism; heme O biosynthesis; heme O from protoheme: step 1/1. In terms of biological role, converts heme B (protoheme IX) to heme O by substitution of the vinyl group on carbon 2 of heme B porphyrin ring with a hydroxyethyl farnesyl side group. The chain is Protoheme IX farnesyltransferase 1 from Cenarchaeum symbiosum (strain A).